Consider the following 300-residue polypeptide: DNA repair protein PprA (300 aa).

Position 88 is a phosphothreonine (T88). Phosphoserine is present on S128. A Phosphothreonine modification is found at T160.

In terms of processing, phosphorylated by RqkA in vitro. Phosphorylated primarily at Thr-88, and to a little extent at Ser-128 and Thr-160.

Its activity is regulated as follows. Phosphorylation increases DNA binding affinity. Functionally, dsDNA-binding protein that contributes to the ionizing radiation resistance of D.radiodurans. Plays a role in DNA repair and genome reconstitution, and is necessary for recovery from severe genomic fragmentation as a result of exposure to severe levels of ionizing radiation. In vitro, binds to double-stranded DNA carrying strand breaks and stimulates the DNA end-joining reaction catalyzed by DNA ligases. Thus, PprA plays a critical role in a non-homologous end-joining (NHEJ) pathway for the repair of radiation-induced DNA double-strands breaks. Cannot bind to dsDNA without strand breaks or single-stranded DNA. In Deinococcus radiodurans (strain ATCC 13939 / DSM 20539 / JCM 16871 / CCUG 27074 / LMG 4051 / NBRC 15346 / NCIMB 9279 / VKM B-1422 / R1), this protein is DNA repair protein PprA (pprA).